Consider the following 28-residue polypeptide: Cytochrome c oxidase subunit 5B, mitochondrial (28 aa).

This sequence belongs to the cytochrome c oxidase subunit 5B family. As to quaternary structure, component of the cytochrome c oxidase (complex IV, CIV), a multisubunit enzyme composed of a catalytic core of 3 subunits and several supernumerary subunits. The complex exists as a monomer or a dimer and forms supercomplexes (SCs) in the inner mitochondrial membrane with ubiquinol-cytochrome c oxidoreductase (cytochrome b-c1 complex, complex III, CIII).

It localises to the mitochondrion inner membrane. Its pathway is energy metabolism; oxidative phosphorylation. Component of the cytochrome c oxidase, the last enzyme in the mitochondrial electron transport chain which drives oxidative phosphorylation. The respiratory chain contains 3 multisubunit complexes succinate dehydrogenase (complex II, CII), ubiquinol-cytochrome c oxidoreductase (cytochrome b-c1 complex, complex III, CIII) and cytochrome c oxidase (complex IV, CIV), that cooperate to transfer electrons derived from NADH and succinate to molecular oxygen, creating an electrochemical gradient over the inner membrane that drives transmembrane transport and the ATP synthase. Cytochrome c oxidase is the component of the respiratory chain that catalyzes the reduction of oxygen to water. Electrons originating from reduced cytochrome c in the intermembrane space (IMS) are transferred via the dinuclear copper A center (CU(A)) of subunit 2 and heme A of subunit 1 to the active site in subunit 1, a binuclear center (BNC) formed by heme A3 and copper B (CU(B)). The BNC reduces molecular oxygen to 2 water molecules using 4 electrons from cytochrome c in the IMS and 4 protons from the mitochondrial matrix. The protein is Cytochrome c oxidase subunit 5B, mitochondrial of Solanum tuberosum (Potato).